Consider the following 190-residue polypeptide: Crossover junction endodeoxyribonuclease RuvC (190 aa).

Catalysis depends on residues Asp8, Glu67, and Asp139. Mg(2+)-binding residues include Asp8, Glu67, and Asp139.

Belongs to the RuvC family. Homodimer which binds Holliday junction (HJ) DNA. The HJ becomes 2-fold symmetrical on binding to RuvC with unstacked arms; it has a different conformation from HJ DNA in complex with RuvA. In the full resolvosome a probable DNA-RuvA(4)-RuvB(12)-RuvC(2) complex forms which resolves the HJ. Mg(2+) serves as cofactor.

It localises to the cytoplasm. It carries out the reaction Endonucleolytic cleavage at a junction such as a reciprocal single-stranded crossover between two homologous DNA duplexes (Holliday junction).. Functionally, the RuvA-RuvB-RuvC complex processes Holliday junction (HJ) DNA during genetic recombination and DNA repair. Endonuclease that resolves HJ intermediates. Cleaves cruciform DNA by making single-stranded nicks across the HJ at symmetrical positions within the homologous arms, yielding a 5'-phosphate and a 3'-hydroxyl group; requires a central core of homology in the junction. The consensus cleavage sequence is 5'-(A/T)TT(C/G)-3'. Cleavage occurs on the 3'-side of the TT dinucleotide at the point of strand exchange. HJ branch migration catalyzed by RuvA-RuvB allows RuvC to scan DNA until it finds its consensus sequence, where it cleaves and resolves the cruciform DNA. In Haemophilus influenzae (strain 86-028NP), this protein is Crossover junction endodeoxyribonuclease RuvC.